Reading from the N-terminus, the 148-residue chain is 3-hydroxyacyl-[acyl-carrier-protein] dehydratase FabZ (148 aa).

H48 is an active-site residue.

Belongs to the thioester dehydratase family. FabZ subfamily.

Its subcellular location is the cytoplasm. It catalyses the reaction a (3R)-hydroxyacyl-[ACP] = a (2E)-enoyl-[ACP] + H2O. Its function is as follows. Involved in unsaturated fatty acids biosynthesis. Catalyzes the dehydration of short chain beta-hydroxyacyl-ACPs and long chain saturated and unsaturated beta-hydroxyacyl-ACPs. The polypeptide is 3-hydroxyacyl-[acyl-carrier-protein] dehydratase FabZ (Campylobacter fetus subsp. fetus (strain 82-40)).